The sequence spans 370 residues: Prolactin-releasing peptide receptor (370 aa).

Over 1–62 the chain is Extracellular; the sequence is MASSTTRGPR…LQLVHQLKGL (62 aa). Asn27 and Asn36 each carry an N-linked (GlcNAc...) asparagine glycan. A helical transmembrane segment spans residues 63 to 83; sequence IVLLYSVVVVVGLVGNCLLVL. The Cytoplasmic segment spans residues 84–101; the sequence is VIARVRRLHNVTNFLIGN. A helical transmembrane segment spans residues 102 to 122; that stretch reads LALSDVLMCTACVPLTLAYAF. Residues 123-126 are Extracellular-facing; the sequence is EPRG. A helical transmembrane segment spans residues 127–147; the sequence is WVFGGGLCHLVFFLQPVTVYV. Residues Cys134 and Cys211 are joined by a disulfide bond. Residues 148–175 lie on the Cytoplasmic side of the membrane; sequence SVFTLTTIAVDRYVVLVHPLRRRISLRL. The helical transmembrane segment at 176 to 196 threads the bilayer; the sequence is SAYAVLAIWALSAVLALPAAV. Over 197 to 225 the chain is Extracellular; that stretch reads HTYHVELKPHDVRLCEEFWGSQERQRQLY. A helical transmembrane segment spans residues 226 to 246; that stretch reads AWGLLLVTYLLPLLVILLSYV. The Cytoplasmic portion of the chain corresponds to 247-276; sequence RVSVKLRNRVVPGCVTQSQADWDRARRRRT. A helical transmembrane segment spans residues 277 to 297; it reads FCLLVVIVVVFAVCWLPLHVF. The Extracellular portion of the chain corresponds to 298–317; the sequence is NLLRDLDPHAIDPYAFGLVQ. The helical transmembrane segment at 318 to 338 threads the bilayer; sequence LLCHWLAMSSACYNPFIYAWL. Residues 339–369 are Cytoplasmic-facing; it reads HDSFREELRKLLVAWPRKIAPHGQNMTVSVV. Residues 365 to 370 form a required for interaction with GRIP1, GRIP2 and PICK1 region; the sequence is TVSVVI.

This sequence belongs to the G-protein coupled receptor 1 family. In terms of assembly, interacts through its C-terminal region with the PDZ domain-containing proteins GRIP1, GRIP2 and PICK1. Interacts with PDZ domains 4 and 5 of GRIP1 and with the PDZ domain of PICK1. Only detected in the pituitary gland and in all cell types of pituitary adenomas.

The protein localises to the cell membrane. Functionally, receptor for prolactin-releasing peptide (PrRP). Implicated in lactation, regulation of food intake and pain-signal processing. The protein is Prolactin-releasing peptide receptor (PRLHR) of Homo sapiens (Human).